Consider the following 640-residue polypeptide: MPGTGLGRLAKHVTAAAAVFLISTGAVLPAQAETAPGSTPSAAPAASVEKHPITTANNGNLHTWWHDNGVFSPAAPTQSDEVRRSSLYDVRVAQANQPQKAYDAFTYMSIPRSGKGKIGYTEEDGAEFSSEAGLTMSWSSFEYAKDVWVEVSLRTGQTISSADQVQIRPSSYNFEKQLVDADTVRIKVPYSDAGYRFSVEFEPQLYTAYNDMSGDSGKLTTEAEGNRPIHTEPRNSMMVFAEPKLRGEQKERLVPTQESGSIHYPEPGEVRNLNSVSAEIIYFRPGTYSMGSDYHAVLPANVKWVYLAPGAYVKGAFRFLHDTQSQYKVTGYGVLSGEQYVYEADTNNSYNHLSGASNCHSSCVKMLQFASADAEQKLDLQGVTVAEPPYHSFVVYGNEQTFHMNVENYKQVGSWYWQTDGIELYQGSTMKNTFFNANDDVLKMYHSDVSIDNTVVWKNENGPVVQWGWTPRNIDNVNVTNTTVIHNRMYWKDVKYNTCIFNSSSHWEDMGSTTKADPNTTVKNMRFENTTVEGMTNCAIRVYALSDTENIHIKNFNIGSWNGLDWTSQVSHLKRYTNSAGEKVTIGNELPDGNGLAIENYSVGGQVIEKSGGNWSDYQLGRLGFDGENWDSWNAWKSAP.

An N-terminal signal peptide occupies residues 1–32 (MPGTGLGRLAKHVTAAAAVFLISTGAVLPAQA).

This sequence belongs to the glycosyl hydrolase 49 family.

Its subcellular location is the secreted. It catalyses the reaction Endohydrolysis of (1-&gt;6)-alpha-D-glucosidic linkages in dextran.. The sequence is that of Dextranase from Arthrobacter globiformis.